Consider the following 465-residue polypeptide: Protein hedgehog (465 aa).

C79 carries the N-palmitoyl cysteine lipid modification. Residues E143, E144, D149, T179, E180, D183, and D185 each coordinate Ca(2+). The Cholesterol glycine ester moiety is linked to residue G251.

The protein belongs to the hedgehog family. As to quaternary structure, interacts with shf. The C-terminal part of the hedgehog protein precursor displays an autoproteolysis activity that results in the cleavage of the full-length protein into two parts (N-product and C-product). In addition, the C-terminal part displays a cholesterol transferase activity that results by the covalent attachment of a cholesterol moiety to the C-terminal of the newly generated N-product. The N-product is the active species in both local and long-range signaling, whereas the C-product has no signaling activity. Post-translationally, cholesterylation is required for N-product targeting to lipid rafts and multimerization. In terms of processing, N-palmitoylation by Rasp of the hedgehog N-product, within the secretory pathway, is required for the embryonic and larval patterning activities of the hedgehog signal.

The protein resides in the nucleus. It localises to the cytoplasm. Its subcellular location is the cell membrane. It catalyses the reaction glycyl-L-cysteinyl-[protein] + cholesterol + H(+) = [protein]-C-terminal glycyl cholesterol ester + N-terminal L-cysteinyl-[protein]. In terms of biological role, the C-terminal part of the hedgehog protein precursor displays an autoproteolysis activity that results in the cleavage of the full-length protein into two parts (N-product and C-product). In addition, the C-terminal part displays a cholesterol transferase activity that results by the covalent attachment of a cholesterol moiety to the C-terminal of the newly generated N-product. Once cleaved, the C-product has no signaling activity and diffuses from the cell. Its function is as follows. The dually lipidated hedgehog protein N-product is a morphogen which is essential for a variety of patterning events during development. Establishes the anterior-posterior axis of the embryonic segments and patterns the larval imaginal disks. Binds to the patched (ptc) receptor, which functions in association with smoothened (smo), to activate the transcription of target genes wingless (wg), decapentaplegic (dpp) and ptc. In the absence of hh, ptc represses the constitutive signaling activity of smo through fused (fu). Essential component of a signaling pathway which regulates the Duox-dependent gut immune response to bacterial uracil; required to activate Cad99C-dependent endosome formation, norpA-dependent Ca2+ mobilization and p38 MAPK, which are essential steps in the Duox-dependent production of reactive oxygen species (ROS) in response to intestinal bacterial infection. During photoreceptor differentiation, it up-regulates transcription of Ubr3, which in turn promotes the hh-signaling pathway by mediating the ubiquitination and degradation of cos. This chain is Protein hedgehog, found in Drosophila yakuba (Fruit fly).